Reading from the N-terminus, the 424-residue chain is Phosphoprotein associated with glycosphingolipid-enriched microdomains 1 (424 aa).

Residues Met-1–Met-17 lie on the Extracellular side of the membrane. A helical; Signal-anchor for type III membrane protein membrane pass occupies residues Val-18–Leu-38. Residues Cys-39 and Cys-42 are each lipidated (S-palmitoyl cysteine). Residues Cys-39–Leu-424 lie on the Cytoplasmic side of the membrane. Phosphoserine is present on residues Ser-52 and Ser-63. Residue Tyr-107 is modified to Phosphotyrosine; by LYN. Ser-157 is subject to Phosphoserine. Tyr-165, Tyr-183, and Tyr-224 each carry phosphotyrosine. The interval Asp-194–Cys-347 is disordered. The segment covering Ala-215 to Asn-230 has biased composition (basic and acidic residues). Ser-226 is subject to Phosphoserine. Residues Ser-236–Ser-247 show a composition bias toward polar residues. Tyr-314 is subject to Phosphotyrosine; by FYN and LYN. Positions Tyr-314–Val-317 are interaction with CSK. Polar residues predominate over residues Ser-331–Cys-347. Position 346 is a phosphoserine (Ser-346). Residues Tyr-351, Tyr-381, and Tyr-409 each carry the phosphotyrosine modification. Residues Pro-361–Leu-424 are disordered. Residues Thr-422–Leu-424 are interaction with NHERF1.

Interacts with NHERF1/EBP50. In resting T-cells, part of a PAG1-NHERF1-MSN complex which is disrupted upon TCR activation. When phosphorylated, interacts with CSK. Identified in a complex with LYN and STAT3. Interacts with LYN. In terms of processing, palmitoylated. Phosphorylated by FYN on Tyr-314 in resting T-cells; which promotes interaction with CSK. Dephosphorylated by PTPRC/CD45 upon TCR activation; which leads to CSK dissociation. May also be dephosphorylated by PTPN11. Hyperphosphorylated in mast cells upon FCER1 activation. Phosphorylated by LYN in response to EPO. Ubiquitously expressed, with highest levels in developing brain, lung, thymus, spleen and testis. Present in mast cells.

Its subcellular location is the cell membrane. Its function is as follows. Negatively regulates TCR (T-cell antigen receptor)-mediated signaling in T-cells and FCER1 (high affinity immunoglobulin epsilon receptor)-mediated signaling in mast cells. Promotes CSK activation and recruitment to lipid rafts, which results in LCK inhibition. Inhibits immunological synapse formation by preventing dynamic arrangement of lipid raft proteins. May be involved in cell adhesion signaling. The polypeptide is Phosphoprotein associated with glycosphingolipid-enriched microdomains 1 (Pag1) (Rattus norvegicus (Rat)).